Consider the following 366-residue polypeptide: Putative zinc metalloprotease slr1821 (366 aa).

Position 20 (His20) interacts with Zn(2+). Glu21 is an active-site residue. A Zn(2+)-binding site is contributed by His24. Transmembrane regions (helical) follow at residues 95 to 115 (AIVISAGVIANLVFAYFLLIG), 293 to 313 (AVINILPLPALDGGQLVFLLI), and 325 to 345 (FQMGVMQTGLVLLLSLGVFLI). The region spanning 106 to 188 (LVFAYFLLIG…VPITVEVQRG (83 aa)) is the PDZ domain.

The protein belongs to the peptidase M50B family. It depends on Zn(2+) as a cofactor.

It is found in the cell inner membrane. The sequence is that of Putative zinc metalloprotease slr1821 from Synechocystis sp. (strain ATCC 27184 / PCC 6803 / Kazusa).